The sequence spans 332 residues: uncharacterized protein (332 aa).

An N-terminal signal peptide occupies residues 1–32 (MSRDRGARGLRKYGRFALATGAATALSLTASG). Residue C33 is the site of N-palmitoyl cysteine attachment. A lipid anchor (S-diacylglycerol cysteine) is attached at C33.

Its subcellular location is the cell membrane. This is an uncharacterized protein from Streptomyces avermitilis (strain ATCC 31267 / DSM 46492 / JCM 5070 / NBRC 14893 / NCIMB 12804 / NRRL 8165 / MA-4680).